The primary structure comprises 217 residues: UPF0319 protein VS_II0881 (217 aa).

Positions 1–21 (MKTIQSIALLSAIVAAPSVLA) are cleaved as a signal peptide.

This sequence belongs to the UPF0319 family.

The protein is UPF0319 protein VS_II0881 of Vibrio atlanticus (strain LGP32) (Vibrio splendidus (strain Mel32)).